The sequence spans 397 residues: Stearoyl-[acyl-carrier-protein] 9-desaturase, chloroplastic (397 aa).

Residues 1 to 33 constitute a chloroplast transit peptide; sequence MALNFNAIASKSQKLPCFALPPKATLRSPKFSM. Residues Glu-138, Glu-176, His-179, Glu-229, Glu-262, and His-265 each coordinate Fe cation.

This sequence belongs to the fatty acid desaturase type 2 family. As to quaternary structure, homodimer. Fe(2+) serves as cofactor.

Its subcellular location is the plastid. The protein resides in the chloroplast. The enzyme catalyses octadecanoyl-[ACP] + 2 reduced [2Fe-2S]-[ferredoxin] + O2 + 2 H(+) = (9Z)-octadecenoyl-[ACP] + 2 oxidized [2Fe-2S]-[ferredoxin] + 2 H2O. Its pathway is lipid metabolism; fatty acid metabolism. Converts stearoyl-ACP to oleoyl-ACP by introduction of a cis double bond between carbons 9 and 10 of the acyl chain. This is Stearoyl-[acyl-carrier-protein] 9-desaturase, chloroplastic from Gossypium hirsutum (Upland cotton).